The following is a 151-amino-acid chain: HTH-type transcriptional regulator FL11 (151 aa).

Positions 5–66 (LDEIDRRIIK…IVNPEALGYS (62 aa)) constitute an HTH asnC-type domain. Residues 24–43 (LREISKITGLAESTIHERIK) constitute a DNA-binding region (H-T-H motif). L-arginine is bound at residue 98–104 (ETTGDYD). Residues Asn118, Asp122, and 133-135 (THT) each bind L-lysine. L-arginine-binding positions include Asp122 and 133-135 (THT).

Homodimer. Binds DNA as a dimer and an octamer.

In the famine mode, FL11 forms dimers and acts as a repressor, leading to growth arrest. In the feast mode, in the presence of high concentrations of lysine or arginine, four dimers assemble into an octamer and cover the fl11 and lysine biosynthesis promoters. This leads to the inhibition of fl11 expression and lysine biosynthesis, decrease of the FL11 concentration in the cell, derepression of the target genes and activation of the metabolism. In terms of biological role, DNA-binding protein involved in the repression of transcription of a large number of genes, thereby arresting growth, in response to environmental changes. The chain is HTH-type transcriptional regulator FL11 from Pyrococcus abyssi (strain GE5 / Orsay).